Here is a 351-residue protein sequence, read N- to C-terminus: DNA beta-glucosyltransferase (351 aa).

Monomer.

It catalyses the reaction Transfers a beta-D-glucosyl residue from UDP-alpha-D-glucose to a hydroxymethylcytosine residue in DNA.. It functions in the pathway genetic information processing; DNA modification. Its function is as follows. Catalyzes the transfer of glucose from uridine diphosphoglucose to 5-hydroxymethyl cytosine of T4 DNA to yield glucosyl 5-hydroxymethyl cytosine (glc-HMC). This DNA process seems to occur immediately after DNA synthesis since the DNA alpha-glucosyltransferase interacts with the clamp protein gp45. The glc-HMC modification protects the phage genome against its own nucleases and the host restriction endonuclease system. The glc-HMC modification also protects against the host CRISPR-Cas9 defense system. This is DNA beta-glucosyltransferase (bgt) from Enterobacteria phage T4 (Bacteriophage T4).